The chain runs to 280 residues: Succinate dehydrogenase [ubiquinone] iron-sulfur subunit 2, mitochondrial (280 aa).

Residues 1–28 constitute a mitochondrion transit peptide; sequence MAFGLIGRVVGTKSSRLSTAARLIPARW. In terms of domain architecture, 2Fe-2S ferredoxin-type spans 51–140; it reads FQIYRWNPDN…ETTITPLPHM (90 aa). Residues Cys101, Cys106, and Cys121 each contribute to the [2Fe-2S] cluster site. Residues 183-213 form the 4Fe-4S ferredoxin-type domain; the sequence is DRAKLDGMYECILCACCSTSCPSYWWNPESY. [4Fe-4S] cluster is bound by residues Cys193, Cys196, and Cys199. Cys203 serves as a coordination point for [3Fe-4S] cluster. Residue Trp208 coordinates a ubiquinone. Residues Cys250 and Cys256 each coordinate [3Fe-4S] cluster. Cys260 contributes to the [4Fe-4S] cluster binding site.

Belongs to the succinate dehydrogenase/fumarate reductase iron-sulfur protein family. Component of complex II composed of eight subunits in plants: four classical SDH subunits SDH1, SDH2, SDH3 and SDH4 (a flavoprotein (FP), an iron-sulfur protein (IP), and a cytochrome b composed of a large and a small subunit.), as well as four subunits unknown in mitochondria from bacteria and heterotrophic eukaryotes. [2Fe-2S] cluster serves as cofactor. It depends on [3Fe-4S] cluster as a cofactor. The cofactor is [4Fe-4S] cluster. Ubiquitous. Preferentially expressed in flowers, inflorescences and root tips.

The protein localises to the mitochondrion inner membrane. It catalyses the reaction a quinone + succinate = fumarate + a quinol. The protein operates within carbohydrate metabolism; tricarboxylic acid cycle; fumarate from succinate (eukaryal route): step 1/1. Iron-sulfur protein (IP) subunit of succinate dehydrogenase (SDH) that is involved in complex II of the mitochondrial electron transport chain and is responsible for transferring electrons from succinate to ubiquinone (coenzyme Q). In Arabidopsis thaliana (Mouse-ear cress), this protein is Succinate dehydrogenase [ubiquinone] iron-sulfur subunit 2, mitochondrial (SDH2-2).